A 351-amino-acid polypeptide reads, in one-letter code: Secreted frizzled-related sequence protein 4 (351 aa).

The signal sequence occupies residues 1–18 (MLRSILVALCLWLRLALG). Residues 19-139 (VRGAPCEAVR…VYDRGVCISP (121 aa)) form the FZ domain. 5 disulfides stabilise this stretch: Cys24/Cys85, Cys32/Cys78, Cys69/Cys108, Cys97/Cys136, and Cys101/Cys125. 2 N-linked (GlcNAc...) asparagine glycosylation sites follow: Asn38 and Asn68. Residues Asn116, Asn194, and Asn240 are each glycosylated (N-linked (GlcNAc...) asparagine). The 129-residue stretch at 178-306 (CKCKKVKPTL…TIQDKKQIAS (129 aa)) folds into the NTR domain. Positions 293 to 303 (EQQRTIQDKKQ) are enriched in basic and acidic residues. Positions 293–351 (EQQRTIQDKKQIASRTSRTSRSNPPKSKGRPPAPKPASPKKNIKARSAPKKSNLKKSAS) are disordered. Low complexity predominate over residues 306–318 (SRTSRTSRSNPPK). Over residues 333–351 (KNIKARSAPKKSNLKKSAS) the composition is skewed to basic residues.

It belongs to the secreted frizzled-related protein (sFRP) family. Expressed in the ovary. Localized to granulosa cells of periovulatory follicles and corpora lutea. Weakly expressed in adult tissues including kidney, brain and lung.

Its subcellular location is the secreted. Its function is as follows. Soluble frizzled-related proteins (sFRPS) function as modulators of Wnt signaling through direct interaction with Wnts. They have a role in regulating cell growth and differentiation in specific cell types. SFRP4 plays a role in bone morphogenesis. May also act as a regulator of adult uterine morphology and function. May also increase apoptosis during ovulation possibly through modulation of FZ1/FZ4/WNT4 signaling. Has phosphaturic effects by specifically inhibiting sodium-dependent phosphate uptake. The polypeptide is Secreted frizzled-related sequence protein 4 (Sfrp4) (Mus musculus (Mouse)).